A 378-amino-acid chain; its full sequence is MDWLRTKRIRAKKRKRNVKENGEVVLKELIECCDGKCNPIKNFSYDQIIKATNNFCQSNRASRIDVYYRCYKGMLDDRPVLIKKGKYTLDMKEICRDIAISSMVSGHKNFLKLLGCCLEFTPPVLVFEYAEVITLGPLLTSHPGYLRRIKIAREVANALTYLHTAFSRVFIHSNLDPFTIFLDGNGVAKLGNFCNCITIPEGETFVHDDTLQKYHELRHNTLKGTHGLGVCNLPVIDPDYKSTGKVTTKTDMHSFGGFMLALVQIREVDDELSLSSDMLRALADLFIKPYDDVRYVHFPLHHHVSKILRKFGYAEVVDSDMSEVAAWPIKAFLRLALRCIGCKLGDPLSSMIQVTKELRLIEKSAYYPSNNRSQMSSI.

A Protein kinase domain is found at 34–378 (DGKCNPIKNF…SNNRSQMSSI (345 aa)). ATP contacts are provided by residues 40–48 (IKNFSYDQI) and Lys83.

Belongs to the protein kinase superfamily. Ser/Thr protein kinase family. ZRK subfamily. As to quaternary structure, interacts with RPP13L4/ZAR1.

The sequence is that of Non-functional pseudokinase ZRK6 from Arabidopsis thaliana (Mouse-ear cress).